Consider the following 482-residue polypeptide: ATP synthase subunit beta (482 aa).

162–169 contacts ATP; it reads GGAGVGKT.

The protein belongs to the ATPase alpha/beta chains family. F-type ATPases have 2 components, CF(1) - the catalytic core - and CF(0) - the membrane proton channel. CF(1) has five subunits: alpha(3), beta(3), gamma(1), delta(1), epsilon(1). CF(0) has four main subunits: a(1), b(1), b'(1) and c(9-12).

The protein resides in the cellular thylakoid membrane. It carries out the reaction ATP + H2O + 4 H(+)(in) = ADP + phosphate + 5 H(+)(out). Produces ATP from ADP in the presence of a proton gradient across the membrane. The catalytic sites are hosted primarily by the beta subunits. This Synechococcus sp. (strain PCC 6716) protein is ATP synthase subunit beta.